We begin with the raw amino-acid sequence, 86 residues long: Small ribosomal subunit protein bS20 (86 aa).

This sequence belongs to the bacterial ribosomal protein bS20 family.

In terms of biological role, binds directly to 16S ribosomal RNA. The polypeptide is Small ribosomal subunit protein bS20 (Mycolicibacterium gilvum (strain PYR-GCK) (Mycobacterium gilvum (strain PYR-GCK))).